An 89-amino-acid polypeptide reads, in one-letter code: MTVGKQHINKSLLYEGRVVSNSMNKTVVIVVETRKTHPKFKKIVRRSIKIKVHDEKNECTIGDKILAIETRPLSREKRHRLYRIVEKAK.

The protein belongs to the universal ribosomal protein uS17 family. As to quaternary structure, part of the 30S ribosomal subunit.

In terms of biological role, one of the primary rRNA binding proteins, it binds specifically to the 5'-end of 16S ribosomal RNA. The polypeptide is Small ribosomal subunit protein uS17 (Leptospira borgpetersenii serovar Hardjo-bovis (strain JB197)).